A 120-amino-acid chain; its full sequence is C-C motif chemokine 27 (120 aa).

The N-terminal stretch at 1 to 25 is a signal peptide; the sequence is MMEGLSPASSLPLLLLLLSPAPEAA. Disulfide bonds link cysteine 34–cysteine 63 and cysteine 35–cysteine 78.

This sequence belongs to the intercrine beta (chemokine CC) family. Monomer, dimer, and tetramer. Heparin avidly promotes oligomerization. Interacts with TNFAIP6 (via Link domain). In terms of tissue distribution, isoform 1 is predominantly expressed in placenta and weakly in skin. Isoform 2 is predominantly expressed in testes and brain, weakly in kidney and liver and even lower in heart and muscle. Low expression of both isoforms in other tissues.

The protein localises to the secreted. It is found in the nucleus. Functionally, chemotactic factor that attracts skin-associated memory T-lymphocytes. May play a role in mediating homing of lymphocytes to cutaneous sites. May play a role in cell migration during embryogenesis. Nuclear forms may facilitate cellular migration by inducing cytoskeletal relaxation. Binds to CCR10. This Mus musculus (Mouse) protein is C-C motif chemokine 27 (Ccl27).